The sequence spans 134 residues: ATP synthase epsilon chain, plastid (134 aa).

The protein belongs to the ATPase epsilon chain family. In terms of assembly, F-type ATPases have 2 components, CF(1) - the catalytic core - and CF(0) - the membrane proton channel. CF(1) has five subunits: alpha(3), beta(3), gamma(1), delta(1), epsilon(1). CF(0) has three main subunits: a, b and c.

It is found in the plastid membrane. In terms of biological role, produces ATP from ADP in the presence of a proton gradient across the membrane. The polypeptide is ATP synthase epsilon chain, plastid (Prototheca wickerhamii).